The following is a 265-amino-acid chain: Leucyl/phenylalanyl-tRNA--protein transferase (265 aa).

Positions 244 to 265 (LDTGPDPASSSVTEISLRPAAP) are disordered.

It belongs to the L/F-transferase family.

It is found in the cytoplasm. The enzyme catalyses N-terminal L-lysyl-[protein] + L-leucyl-tRNA(Leu) = N-terminal L-leucyl-L-lysyl-[protein] + tRNA(Leu) + H(+). The catalysed reaction is N-terminal L-arginyl-[protein] + L-leucyl-tRNA(Leu) = N-terminal L-leucyl-L-arginyl-[protein] + tRNA(Leu) + H(+). It catalyses the reaction L-phenylalanyl-tRNA(Phe) + an N-terminal L-alpha-aminoacyl-[protein] = an N-terminal L-phenylalanyl-L-alpha-aminoacyl-[protein] + tRNA(Phe). In terms of biological role, functions in the N-end rule pathway of protein degradation where it conjugates Leu, Phe and, less efficiently, Met from aminoacyl-tRNAs to the N-termini of proteins containing an N-terminal arginine or lysine. The protein is Leucyl/phenylalanyl-tRNA--protein transferase of Methylibium petroleiphilum (strain ATCC BAA-1232 / LMG 22953 / PM1).